Reading from the N-terminus, the 140-residue chain is MTCTLRLTVAALVLLGICHLSRPVAAYQKCARYWYCWLPYDIERDRYDDGYRLCCYCRNAWTPWQCREDEQFERLRCGSRYYTLCCYTEDDNGNGNGNGNGYGNGNGNGNGNNYLKYLFGGNGNGNGEFWEEYIDERYDK.

An N-terminal signal peptide occupies residues 1 to 26 (MTCTLRLTVAALVLLGICHLSRPVAA).

Belongs to the N16 matrix protein family. In terms of assembly, heterooligomer; disulfide-linked. Pif97, Pif80, N16 and other proteins form a complex. As to expression, component of conchiolin, the organic matrix of nacre. Only expressed in the dorsal region of the mantle.

The protein localises to the secreted. The protein resides in the extracellular space. Its subcellular location is the extracellular matrix. May be specifically involved in the formation of the nacreous layer. In Margaritifera margaritifera (Freshwater pearl mussel), this protein is Perlin matrix protein.